The chain runs to 149 residues: Endoribonuclease YbeY (149 aa).

Zn(2+) is bound by residues His-113, His-117, and His-123.

It belongs to the endoribonuclease YbeY family. Zn(2+) serves as cofactor.

The protein localises to the cytoplasm. In terms of biological role, single strand-specific metallo-endoribonuclease involved in late-stage 70S ribosome quality control and in maturation of the 3' terminus of the 16S rRNA. The chain is Endoribonuclease YbeY from Saccharophagus degradans (strain 2-40 / ATCC 43961 / DSM 17024).